A 244-amino-acid polypeptide reads, in one-letter code: MLEIVYQDEYLVAVNKPAGMLVHRSWLDKHETEFVMQTLRDQIGQHVFPLHRLDRPTSGVLVFALSSQIASEVMPMFANHEMEKTYHAIVRGWIEEANVLDYPLKEELDKIADKFAKQDKEAQSAVTAYRPLAKVELPIATGKFATTRYCLMEMQPKTGRKHQLRRHMAHLRHPIVGDTTHGDGVHNRLFREHFSAQRLMLHASELRFMHPYTQQPLVIRAGLDEVWQGLLSEFGWQESLLINA.

D54 is an active-site residue.

The protein belongs to the pseudouridine synthase RluA family.

It carries out the reaction uridine(65) in tRNA = pseudouridine(65) in tRNA. Functionally, responsible for synthesis of pseudouridine from uracil-65 in transfer RNAs. This Vibrio cholerae serotype O1 (strain ATCC 39315 / El Tor Inaba N16961) protein is tRNA pseudouridine synthase C (truC).